A 421-amino-acid chain; its full sequence is MEYDLTQKTLPFLDRHLIYPLLQFLKGRGVYNDTELLQLEYDLLKDTNMTDYLVELSKELGQNDADLQAKKENVVKTLAELEEATKPVFEVLENPEVVSELKENKTQNQALLTSKYGLSVEQINLLYKFGQFQYNAGRYQAASDILYHFRALSTDPELVASATWGRFACEILTSQWDSVLEELGKLRDSVDSRSLDPQQQLHQRMWVIHWSLFPFFQNDTKGKDALCDLFFSSSYISTIQAACPWILRYLVVAVIAGGHPHTASVFQKRLKDLVRVVGQEEYEYQDPLTRFVKSLYIDYSFEDAQNQLADCEKVLKQDFFLADSADAFLESARKLMSQVYCRVHQRVDIAQLSQTLNLSQEQGEKWIANLIKDSRMDAKIDESDSTVILNHPSVSVYQQVIEKTKGLTFRSSQVLNQGVTI.

In terms of domain architecture, PCI spans 215-394 (FFQNDTKGKD…STVILNHPSV (180 aa)).

This sequence belongs to the eIF-3 subunit E family. Component of the eukaryotic translation initiation factor 3 (eIF-3) complex.

Its subcellular location is the cytoplasm. In terms of biological role, component of the eukaryotic translation initiation factor 3 (eIF-3) complex, which is involved in protein synthesis of a specialized repertoire of mRNAs and, together with other initiation factors, stimulates binding of mRNA and methionyl-tRNAi to the 40S ribosome. The eIF-3 complex specifically targets and initiates translation of a subset of mRNAs involved in cell proliferation. This chain is Eukaryotic translation initiation factor 3 subunit E, found in Yarrowia lipolytica (strain CLIB 122 / E 150) (Yeast).